Reading from the N-terminus, the 20-residue chain is 26 kDa protein (20 aa).

The chain is 26 kDa protein from Bacillus cereus.